A 530-amino-acid polypeptide reads, in one-letter code: Bifunctional purine biosynthesis protein PurH (530 aa).

The MGS-like domain occupies 1 to 149 (MASDFLPVHR…KNFARVAVAT (149 aa)).

Belongs to the PurH family.

It carries out the reaction (6R)-10-formyltetrahydrofolate + 5-amino-1-(5-phospho-beta-D-ribosyl)imidazole-4-carboxamide = 5-formamido-1-(5-phospho-D-ribosyl)imidazole-4-carboxamide + (6S)-5,6,7,8-tetrahydrofolate. The enzyme catalyses IMP + H2O = 5-formamido-1-(5-phospho-D-ribosyl)imidazole-4-carboxamide. The protein operates within purine metabolism; IMP biosynthesis via de novo pathway; 5-formamido-1-(5-phospho-D-ribosyl)imidazole-4-carboxamide from 5-amino-1-(5-phospho-D-ribosyl)imidazole-4-carboxamide (10-formyl THF route): step 1/1. It participates in purine metabolism; IMP biosynthesis via de novo pathway; IMP from 5-formamido-1-(5-phospho-D-ribosyl)imidazole-4-carboxamide: step 1/1. The polypeptide is Bifunctional purine biosynthesis protein PurH (Xylella fastidiosa (strain M12)).